A 131-amino-acid chain; its full sequence is Large ribosomal subunit protein eL32 (131 aa).

The protein belongs to the eukaryotic ribosomal protein eL32 family.

This chain is Large ribosomal subunit protein eL32 (RPL32), found in Eremothecium gossypii (strain ATCC 10895 / CBS 109.51 / FGSC 9923 / NRRL Y-1056) (Yeast).